A 543-amino-acid polypeptide reads, in one-letter code: Mitochondrial distribution and morphology protein 34 (543 aa).

One can recognise an SMP-LTD domain in the interval 1-202 (MSFNVNWNSL…LPTLLHKVSL (202 aa)). A disordered region spans residues 519–543 (AFSHNDPSITPFELPPPPYHQLSRA).

The protein belongs to the MDM34 family. In terms of assembly, component of the ER-mitochondria encounter structure (ERMES) or MDM complex, composed of MMM1, MDM10, MDM12 and MDM34.

The protein resides in the mitochondrion outer membrane. Component of the ERMES/MDM complex, which serves as a molecular tether to connect the endoplasmic reticulum (ER) and mitochondria. Components of this complex are involved in the control of mitochondrial shape and protein biogenesis, and function in nonvesicular lipid trafficking between the ER and mitochondria. MDM34 is required for the interaction of the ER-resident membrane protein MMM1 and the outer mitochondrial membrane-resident beta-barrel protein MDM10. This Clavispora lusitaniae (strain ATCC 42720) (Yeast) protein is Mitochondrial distribution and morphology protein 34.